Reading from the N-terminus, the 207-residue chain is 2,3-bisphosphoglycerate-dependent phosphoglycerate mutase (207 aa).

Substrate-binding positions include 10–17 (RHGQSEWN), 23–24 (TG), R62, 89–92 (ERDY), K100, 116–117 (RR), and 160–161 (GN). H11 serves as the catalytic Tele-phosphohistidine intermediate. Residue E89 is the Proton donor/acceptor of the active site.

This sequence belongs to the phosphoglycerate mutase family. BPG-dependent PGAM subfamily. In terms of assembly, homodimer.

It carries out the reaction (2R)-2-phosphoglycerate = (2R)-3-phosphoglycerate. It participates in carbohydrate degradation; glycolysis; pyruvate from D-glyceraldehyde 3-phosphate: step 3/5. Functionally, catalyzes the interconversion of 2-phosphoglycerate and 3-phosphoglycerate. The chain is 2,3-bisphosphoglycerate-dependent phosphoglycerate mutase from Bradyrhizobium sp. (strain BTAi1 / ATCC BAA-1182).